A 574-amino-acid chain; its full sequence is M-phase inducer phosphatase 2 (574 aa).

Disordered stretches follow at residues 31–51 (GFGF…SSSP) and 90–110 (RRTS…AGLC). Position 42 is a phosphoserine (S42). Low complexity predominate over residues 90–105 (RRTSECSLSSESSESS). Phosphoserine; by MELK is present on S166. Phosphoserine is present on S246. S319 is modified (phosphoserine; by MAPKAPK2 and MELK). The residue at position 319 (S319) is a Phosphoserine; by MELK and MAPK14. Residues 339 to 359 (DVPVLSKRRKSGTPLEEQQLE) are disordered. S349 bears the Phosphoserine; by AURKA mark. S370 is subject to Phosphoserine; by BRSK1 and MAPK14. One can recognise a Rhodanese domain in the interval 425 to 532 (IVEKFVIVDC…FFPQHPNFCE (108 aa)). C481 is an active-site residue. Residue S557 is modified to Phosphoserine.

It belongs to the MPI phosphatase family. In terms of assembly, interacts with MAPK14 and 14-3-3 proteins. Post-translationally, phosphorylated by BRSK1 in vitro. Phosphorylated by CHEK1, which inhibits the activity of this protein. Phosphorylation at Ser-349 by AURKA might locally participate in the control of the onset of mitosis. Phosphorylation by MELK at Ser-166 promotes localization to the centrosome and the spindle poles during mitosis. Phosphorylation at Ser-319 and Ser-370 by MAPK14 is required for binding to 14-3-3 proteins.

It is found in the cytoplasm. It localises to the cytoskeleton. The protein resides in the microtubule organizing center. The protein localises to the centrosome. Its subcellular location is the spindle pole. It carries out the reaction O-phospho-L-tyrosyl-[protein] + H2O = L-tyrosyl-[protein] + phosphate. Stimulated by B-type cyclins. Functionally, tyrosine protein phosphatase which functions as a dosage-dependent inducer of mitotic progression. Directly dephosphorylates CDK1 and stimulates its kinase activity. Required for G2/M phases of the cell cycle progression and abscission during cytokinesis in a ECT2-dependent manner. The three isoforms seem to have a different level of activity. The polypeptide is M-phase inducer phosphatase 2 (Cdc25b) (Rattus norvegicus (Rat)).